The primary structure comprises 554 residues: Esterase cest-33 (554 aa).

Residue glycine 2 is the site of N-myristoyl glycine attachment. Cysteine 76 and cysteine 98 are disulfide-bonded. Serine 208 (acyl-ester intermediate) is an active-site residue. Active-site charge relay system residues include glutamate 331 and histidine 446.

Belongs to the type-B carboxylesterase/lipase family.

Its subcellular location is the cytoplasm. It localises to the cell membrane. The enzyme catalyses a carboxylic ester + H2O = an alcohol + a carboxylate + H(+). The protein is Esterase cest-33 of Caenorhabditis elegans.